The primary structure comprises 225 residues: MGKVVSVILAGGKGKRMGAEVSKQFIEINGKPIIYYTLKAFEECKGIDEIILVLPKDEIDYFKREIEPRFDFKISKIIEGGKERQDSVYNALNSIGDCDIVLIHDGARAFVSNKIIEDGIKYSREFGAAAPGVMPKDTIKVKNLEGFSVDTPNRASLVAVQTPQCFKYNLIKKGHNKVKNEKIQVTDDTMIVELLGEKVYLFEGDYKNIKVTTPEDLILAEHFVK.

This sequence belongs to the IspD/TarI cytidylyltransferase family. IspD subfamily.

The enzyme catalyses 2-C-methyl-D-erythritol 4-phosphate + CTP + H(+) = 4-CDP-2-C-methyl-D-erythritol + diphosphate. It functions in the pathway isoprenoid biosynthesis; isopentenyl diphosphate biosynthesis via DXP pathway; isopentenyl diphosphate from 1-deoxy-D-xylulose 5-phosphate: step 2/6. Catalyzes the formation of 4-diphosphocytidyl-2-C-methyl-D-erythritol from CTP and 2-C-methyl-D-erythritol 4-phosphate (MEP). The polypeptide is 2-C-methyl-D-erythritol 4-phosphate cytidylyltransferase (Clostridium perfringens (strain ATCC 13124 / DSM 756 / JCM 1290 / NCIMB 6125 / NCTC 8237 / Type A)).